A 238-amino-acid polypeptide reads, in one-letter code: Beta-glucanase (238 aa).

An N-terminal signal peptide occupies residues 1 to 26; it reads MMKKKSWFTLMITGVISLFFSVSAFA. The 210-residue stretch at 29–238 folds into the GH16 domain; sequence VFWEPLSYFN…EYDWVKYTSN (210 aa). Residues Cys-56 and Cys-85 are joined by a disulfide bond. Glu-129 acts as the Nucleophile in catalysis. Glu-133 serves as the catalytic Proton donor.

It belongs to the glycosyl hydrolase 16 family.

The catalysed reaction is Hydrolysis of (1-&gt;4)-beta-D-glucosidic linkages in beta-D-glucans containing (1-&gt;3)- and (1-&gt;4)-bonds.. This chain is Beta-glucanase (gluB), found in Paenibacillus polymyxa (Bacillus polymyxa).